The primary structure comprises 551 residues: Serine/threonine-protein kinase ppk21 (551 aa).

A disordered region spans residues 24–43 (EARGERNPVKPQSSNVVPGT). One can recognise a Protein kinase domain in the interval 55–315 (YVFGDIIGDG…TQQIKQFPFF (261 aa)). Residues 65–67 (SFS) and lysine 84 each bind ATP. The segment at 86 to 131 (LDKKYIVKENKVKYVNIERDSMMRLNGFPGISRLFHTFQDDLKLYY) is PIF-pocket. ATP contacts are provided by residues 134–136 (ELA) and glutamate 140. Aspartate 179 functions as the Proton acceptor in the catalytic mechanism. 2 residues coordinate ATP: glutamate 183 and aspartate 197. Phosphoserine; by autocatalysis is present on serine 220. Phosphoserine is present on serine 538.

This sequence belongs to the protein kinase superfamily. AGC Ser/Thr protein kinase family. PDPK1 subfamily.

The protein localises to the cytoplasm. It is found in the nucleus. Its subcellular location is the cytoskeleton. The protein resides in the microtubule organizing center. It localises to the spindle pole body. The enzyme catalyses L-seryl-[protein] + ATP = O-phospho-L-seryl-[protein] + ADP + H(+). The catalysed reaction is L-threonyl-[protein] + ATP = O-phospho-L-threonyl-[protein] + ADP + H(+). In Schizosaccharomyces pombe (strain 972 / ATCC 24843) (Fission yeast), this protein is Serine/threonine-protein kinase ppk21 (ppk21).